The following is a 518-amino-acid chain: Nitrogenase iron-iron protein alpha chain (518 aa).

[8Fe-7S] cluster contacts are provided by Cys-49, Cys-75, and Cys-138. Cys-257 and His-423 together coordinate [8Fe-9S-C-homocitryl] cluster.

This sequence belongs to the NifD/NifK/NifE/NifN family. In terms of assembly, hexamer of two alpha, two beta, and two delta chains. [8Fe-7S] cluster serves as cofactor. The cofactor is [8Fe-9S-C-homocitryl] cluster.

The catalysed reaction is N2 + 8 reduced [2Fe-2S]-[ferredoxin] + 16 ATP + 16 H2O = H2 + 8 oxidized [2Fe-2S]-[ferredoxin] + 2 NH4(+) + 16 ADP + 16 phosphate + 6 H(+). Its function is as follows. This iron-iron protein is part of the nitrogenase complex that catalyzes the key enzymatic reactions in nitrogen fixation. Other nitrogenase complexes utilize a molybdenum-iron protein or a vanadium-iron protein. The polypeptide is Nitrogenase iron-iron protein alpha chain (anfD) (Azotobacter vinelandii).